Here is a 155-residue protein sequence, read N- to C-terminus: Urease accessory protein UreE (155 aa).

This sequence belongs to the UreE family.

It is found in the cytoplasm. Its function is as follows. Involved in urease metallocenter assembly. Binds nickel. Probably functions as a nickel donor during metallocenter assembly. The protein is Urease accessory protein UreE of Deinococcus radiodurans (strain ATCC 13939 / DSM 20539 / JCM 16871 / CCUG 27074 / LMG 4051 / NBRC 15346 / NCIMB 9279 / VKM B-1422 / R1).